The sequence spans 186 residues: Transcription factor FapR (186 aa).

Residues 98–168 (FTKTQIARGH…YVIEVNSYVR (71 aa)) enclose the MaoC-like domain.

It belongs to the FapR family.

Functionally, transcriptional factor involved in regulation of membrane lipid biosynthesis by repressing genes involved in fatty acid and phospholipid metabolism. The sequence is that of Transcription factor FapR from Staphylococcus haemolyticus (strain JCSC1435).